We begin with the raw amino-acid sequence, 253 residues long: MNYIVIKIGGSTLTELHETTIDDIAQLKQQDLHPIIIHGGGPFINQALEQQGVDSLFEDGLRVTTDEVMSITSQILIGKVNPQLVSKMNDENIQSIGLNGIDAKLFDVEPLNEKYGYVGEPININTAVIDHLTEEYIPVIASIGRHKTSRHLYNINADTLAYKIAQTLNAPIYLLSDIPGVMIDNKVKATLNSEHIKNYIEQEQIYGGMIPKVQDAISAIEYGCQKVVIAAGNEAHVVERIRTGKGIGTTIVL.

Substrate-binding positions include 40–41, Arg-62, and Asn-154; that span reads GG.

This sequence belongs to the acetylglutamate kinase family. ArgB subfamily.

Its subcellular location is the cytoplasm. It catalyses the reaction N-acetyl-L-glutamate + ATP = N-acetyl-L-glutamyl 5-phosphate + ADP. Its pathway is amino-acid biosynthesis; L-arginine biosynthesis; N(2)-acetyl-L-ornithine from L-glutamate: step 2/4. Catalyzes the ATP-dependent phosphorylation of N-acetyl-L-glutamate. In Staphylococcus saprophyticus subsp. saprophyticus (strain ATCC 15305 / DSM 20229 / NCIMB 8711 / NCTC 7292 / S-41), this protein is Acetylglutamate kinase.